The sequence spans 314 residues: Protein YIF1B (314 aa).

M1 carries the post-translational modification N-acetylmethionine. Residues 1–12 (MHPAGLAAAAAG) are compositionally biased toward low complexity. The segment at 1–55 (MHPAGLAAAAAGTPRLRKWPSKRRIPVSQPGMADPHQLFDDTSSAQSRGYGAQRA) is disordered. Residues 1–156 (MHPAGLAAAA…APRFDVNAPD (156 aa)) are Cytoplasmic-facing. At T13 the chain carries Phosphothreonine. Residues 15–25 (RLRKWPSKRRI) are compositionally biased toward basic residues. At S65 the chain carries Phosphoserine. A helical membrane pass occupies residues 157–177 (LYIPAMAFITYVLVAGLALGT). The Extracellular portion of the chain corresponds to 178-192 (QDRFSPDLLGLQASS). A helical membrane pass occupies residues 193–213 (ALAWLTLEVLAILLSLYLVTV). Over 214–219 (NTDLTT) the chain is Cytoplasmic. The helical transmembrane segment at 220–240 (IDLVAFLGYKYVGMIGGVLMG) threads the bilayer. L241 is a topological domain (extracellular). The helical transmembrane segment at 242-262 (LFGKIGYYLVLGWCCVAIFVF) threads the bilayer. The Cytoplasmic segment spans residues 263-292 (MIRTLRLKILADAAAEGVPVRGARNQLRMY). A helical transmembrane segment spans residues 293 to 313 (LTMAVAAAQPMLMYWLTFHLV). Position 314 (R314) is a topological domain, extracellular.

This sequence belongs to the YIF1 family. Interacts with HTR1A (via C-terminus). Interacts with ABCB9 (via TMD0); this interaction allows (but is not essential) the ER-to-Golgi trafficking and strongly depends on a salt bridge within TMD0.

It localises to the endoplasmic reticulum membrane. The protein resides in the golgi apparatus membrane. The protein localises to the endoplasmic reticulum-Golgi intermediate compartment membrane. Functions in endoplasmic reticulum to Golgi vesicle-mediated transport and regulates the proper organization of the endoplasmic reticulum and the Golgi. Plays a key role in targeting to neuronal dendrites receptors such as HTR1A. Plays also a role in primary cilium and sperm flagellum assembly probably through protein transport to these compartments. This is Protein YIF1B from Homo sapiens (Human).